Here is a 466-residue protein sequence, read N- to C-terminus: ATP synthase subunit beta (466 aa).

148-155 (GGAGVGKT) lines the ATP pocket.

Belongs to the ATPase alpha/beta chains family. In terms of assembly, F-type ATPases have 2 components, CF(1) - the catalytic core - and CF(0) - the membrane proton channel. CF(1) has five subunits: alpha(3), beta(3), gamma(1), delta(1), epsilon(1). CF(0) has three main subunits: a(1), b(2) and c(9-12). The alpha and beta chains form an alternating ring which encloses part of the gamma chain. CF(1) is attached to CF(0) by a central stalk formed by the gamma and epsilon chains, while a peripheral stalk is formed by the delta and b chains.

It is found in the cell inner membrane. The enzyme catalyses ATP + H2O + 4 H(+)(in) = ADP + phosphate + 5 H(+)(out). Its function is as follows. Produces ATP from ADP in the presence of a proton gradient across the membrane. The catalytic sites are hosted primarily by the beta subunits. The chain is ATP synthase subunit beta from Herminiimonas arsenicoxydans.